The sequence spans 196 residues: Guanylate kinase (196 aa).

In terms of domain architecture, Guanylate kinase-like spans 8-189 (GKIIIISGPS…AADKLRHILY (182 aa)). Residue 15–22 (GPSGVGKK) coordinates ATP.

Belongs to the guanylate kinase family.

Its subcellular location is the cytoplasm. The enzyme catalyses GMP + ATP = GDP + ADP. Its function is as follows. Essential for recycling GMP and indirectly, cGMP. In Malacoplasma penetrans (strain HF-2) (Mycoplasma penetrans), this protein is Guanylate kinase.